A 119-amino-acid polypeptide reads, in one-letter code: NADH-quinone oxidoreductase subunit A (119 aa).

The next 3 helical transmembrane spans lie at 7–27 (FPVLLFIIIGVGLGLALMTIG), 63–83 (LIAILFILFDLETAFLFPWGV), and 88–108 (IGWPGFFAMGVFLLEFLVGFV).

Belongs to the complex I subunit 3 family. In terms of assembly, NDH-1 is composed of 14 different subunits. Subunits NuoA, H, J, K, L, M, N constitute the membrane sector of the complex.

Its subcellular location is the cell inner membrane. The enzyme catalyses a quinone + NADH + 5 H(+)(in) = a quinol + NAD(+) + 4 H(+)(out). In terms of biological role, NDH-1 shuttles electrons from NADH, via FMN and iron-sulfur (Fe-S) centers, to quinones in the respiratory chain. The immediate electron acceptor for the enzyme in this species is believed to be ubiquinone. Couples the redox reaction to proton translocation (for every two electrons transferred, four hydrogen ions are translocated across the cytoplasmic membrane), and thus conserves the redox energy in a proton gradient. The polypeptide is NADH-quinone oxidoreductase subunit A (Ralstonia nicotianae (strain ATCC BAA-1114 / GMI1000) (Ralstonia solanacearum)).